Reading from the N-terminus, the 121-residue chain is Large ribosomal subunit protein uL14c (121 aa).

As to quaternary structure, component of the chloroplast large ribosomal subunit (LSU). Mature 70S chloroplast ribosomes of higher plants consist of a small (30S) and a large (50S) subunit. The 30S small subunit contains 1 molecule of ribosomal RNA (16S rRNA) and 24 different proteins. The 50S large subunit contains 3 rRNA molecules (23S, 5S and 4.5S rRNA) and 33 different proteins.

The protein localises to the plastid. It is found in the chloroplast. Functionally, component of the chloroplast ribosome (chloro-ribosome), a dedicated translation machinery responsible for the synthesis of chloroplast genome-encoded proteins, including proteins of the transcription and translation machinery and components of the photosynthetic apparatus. This is Large ribosomal subunit protein uL14c from Spinacia oleracea (Spinach).